The following is a 571-amino-acid chain: Medium/long-chain-fatty-acid--CoA ligase FadD8 (571 aa).

The tract at residues 1-22 is disordered; it reads MSTAGDDAVGVPPACGGRSDAV.

This sequence belongs to the ATP-dependent AMP-binding enzyme family.

The catalysed reaction is a medium-chain fatty acid + ATP + CoA = a medium-chain fatty acyl-CoA + AMP + diphosphate. It carries out the reaction a long-chain fatty acid + ATP + CoA = a long-chain fatty acyl-CoA + AMP + diphosphate. The enzyme catalyses hexanoate + ATP + CoA = hexanoyl-CoA + AMP + diphosphate. It catalyses the reaction dodecanoate + ATP + CoA = dodecanoyl-CoA + AMP + diphosphate. The catalysed reaction is hexadecanoate + ATP + CoA = hexadecanoyl-CoA + AMP + diphosphate. Its pathway is lipid metabolism; fatty acid metabolism. In terms of biological role, catalyzes the activation of medium/long-chain fatty acids as acyl-coenzyme A (acyl-CoA). In Mycobacterium tuberculosis (strain ATCC 25618 / H37Rv), this protein is Medium/long-chain-fatty-acid--CoA ligase FadD8.